We begin with the raw amino-acid sequence, 239 residues long: Glandular kallikrein, prostatic (239 aa).

Positions Val1–Ala236 constitute a Peptidase S1 domain. Intrachain disulfides connect Cys7-Cys151, Cys26-Cys42, Cys128-Cys197, Cys162-Cys176, and Cys187-Cys212. His41 functions as the Charge relay system in the catalytic mechanism. An N-linked (GlcNAc...) asparagine glycan is attached at Asn78. Asp96 acts as the Charge relay system in catalysis. Residue Asn169 is glycosylated (N-linked (GlcNAc...) asparagine). The active-site Charge relay system is Ser191.

This sequence belongs to the peptidase S1 family. Kallikrein subfamily.

It carries out the reaction Preferential cleavage of Arg-|-Xaa bonds in small molecule substrates. Highly selective action to release kallidin (lysyl-bradykinin) from kininogen involves hydrolysis of Met-|-Xaa or Leu-|-Xaa.. Glandular kallikreins cleave Met-Lys and Arg-Ser bonds in kininogen to release Lys-bradykinin. The chain is Glandular kallikrein, prostatic from Cavia porcellus (Guinea pig).